Reading from the N-terminus, the 483-residue chain is 5-hydroxytryptamine receptor 3A (483 aa).

Positions 1–23 (MPLCIPQVLLALFLSVLIAQGEG) are cleaved as a signal peptide. Topologically, residues 24 to 246 (SRRRATQAHS…MKFYVVIRRR (223 aa)) are extracellular. N-linked (GlcNAc...) asparagine glycans are attached at residues Asn109, Asn175, and Asn191. Cys162 and Cys176 are disulfide-bonded. Residues 247–273 (PLFYAVSLLLPSIFLMVVDIVGFCLPP) traverse the membrane as a helical segment. Over 274 to 278 (DSGER) the chain is Cytoplasmic. A helical membrane pass occupies residues 279-297 (VSFKITLLLGYSVFLIIVS). The Extracellular segment spans residues 298-307 (DTLPATAIGT). A helical transmembrane segment spans residues 308 to 326 (PLIGVYFVVCMALLVISLA). Over 327–460 (ETIFIVQLVH…GYVLDRLLFR (134 aa)) the chain is Cytoplasmic. The interval 393-414 (VGSPQDLEKTSRSRDSPLPPPR) is disordered. Residues 398 to 407 (DLEKTSRSRD) are compositionally biased toward basic and acidic residues. The segment at 419-455 (AVRGLLQELSSIRHSLEKRDEMREVARDWLRVGYVLD) is HA-stretch; determines single-channel conductance in 5-HT3 receptors. Residues 461–480 (IYLLAVLAYSITLVTLWSIW) form a helical membrane-spanning segment. Residues 481–483 (HYS) are Extracellular-facing.

The protein belongs to the ligand-gated ion channel (TC 1.A.9) family. 5-hydroxytryptamine receptor (TC 1.A.9.2) subfamily. HTR3A sub-subfamily. As to quaternary structure, forms homopentameric as well as heteropentameric serotonin-activated cation-selective channel complexes with HTR3B or HTR3C or HTR3D or HTR3E. The homomeric complex is functional but exhibits low conductance with modified voltage dependence, and decreased agonist and antagonist affinity. Heteropentameric complexes display properties which resemble that of neuronal serotonin-activated channels in vivo. Interacts with RIC3. In terms of tissue distribution, expressed in central and peripheral neurons.

It localises to the postsynaptic cell membrane. The protein localises to the cell membrane. It catalyses the reaction Na(+)(in) = Na(+)(out). The enzyme catalyses K(+)(in) = K(+)(out). It carries out the reaction Ca(2+)(in) = Ca(2+)(out). The catalysed reaction is Mg(2+)(in) = Mg(2+)(out). Its function is as follows. Forms serotonin (5-hydroxytryptamine/5-HT3)-activated cation-selective channel complexes, which when activated cause fast, depolarizing responses in neurons. In Rattus norvegicus (Rat), this protein is 5-hydroxytryptamine receptor 3A.